Here is a 72-residue protein sequence, read N- to C-terminus: Small, acid-soluble spore protein C (72 aa).

This sequence belongs to the alpha/beta-type SASP family.

SASP are bound to spore DNA. They are double-stranded DNA-binding proteins that cause DNA to change to an a-like conformation. They protect the DNA backbone from chemical and enzymatic cleavage and are thus involved in dormant spore's high resistance to UV light. This is Small, acid-soluble spore protein C (sspC) from Bacillus subtilis (strain 168).